The following is a 504-amino-acid chain: uncharacterized protein (504 aa).

The next 3 helical transmembrane spans lie at 146-166 (TSAG…INIA), 196-216 (SSAA…ADVL), and 330-350 (SMAL…VAVA). An a nucleoside 3',5'-cyclic phosphate-binding site is contributed by 372 to 492 (FLNIDVPLQA…EIAYGVARTR (121 aa)).

The protein localises to the cell membrane. This is an uncharacterized protein from Mycobacterium tuberculosis (strain CDC 1551 / Oshkosh).